We begin with the raw amino-acid sequence, 502 residues long: Glycerol kinase (502 aa).

Thr14 provides a ligand contact to ADP. ATP-binding residues include Thr14, Thr15, and Ser16. Thr14 provides a ligand contact to sn-glycerol 3-phosphate. Position 18 (Arg18) interacts with ADP. Sn-glycerol 3-phosphate contacts are provided by Arg84, Glu85, and Tyr136. Glycerol is bound by residues Arg84, Glu85, and Tyr136. His232 bears the Phosphohistidine; by HPr mark. Sn-glycerol 3-phosphate is bound at residue Asp246. The glycerol site is built by Asp246 and Gln247. Thr268 and Gly311 together coordinate ADP. The ATP site is built by Thr268, Gly311, Gln315, and Gly412. 2 residues coordinate ADP: Gly412 and Asn416.

It belongs to the FGGY kinase family. Homotetramer and homodimer (in equilibrium). The phosphoenolpyruvate-dependent sugar phosphotransferase system (PTS), including enzyme I, and histidine-containing protein (HPr) are required for the phosphorylation, which leads to the activation of the enzyme.

It catalyses the reaction glycerol + ATP = sn-glycerol 3-phosphate + ADP + H(+). It participates in polyol metabolism; glycerol degradation via glycerol kinase pathway; sn-glycerol 3-phosphate from glycerol: step 1/1. Activated by phosphorylation and inhibited by fructose 1,6-bisphosphate (FBP). Its function is as follows. Key enzyme in the regulation of glycerol uptake and metabolism. Catalyzes the phosphorylation of glycerol to yield sn-glycerol 3-phosphate. This Streptococcus gordonii (strain Challis / ATCC 35105 / BCRC 15272 / CH1 / DL1 / V288) protein is Glycerol kinase.